A 627-amino-acid polypeptide reads, in one-letter code: DNA mismatch repair protein MutL (627 aa).

It belongs to the DNA mismatch repair MutL/HexB family.

In terms of biological role, this protein is involved in the repair of mismatches in DNA. It is required for dam-dependent methyl-directed DNA mismatch repair. May act as a 'molecular matchmaker', a protein that promotes the formation of a stable complex between two or more DNA-binding proteins in an ATP-dependent manner without itself being part of a final effector complex. The polypeptide is DNA mismatch repair protein MutL (Mesorhizobium japonicum (strain LMG 29417 / CECT 9101 / MAFF 303099) (Mesorhizobium loti (strain MAFF 303099))).